The sequence spans 223 residues: Small ribosomal subunit protein uS3 (223 aa).

Residues 39-108 (IRNFVKKNSY…NILINIVEVK (70 aa)) form the KH type-2 domain.

It belongs to the universal ribosomal protein uS3 family. In terms of assembly, part of the 30S ribosomal subunit. Forms a tight complex with proteins S10 and S14.

Functionally, binds the lower part of the 30S subunit head. Binds mRNA in the 70S ribosome, positioning it for translation. The polypeptide is Small ribosomal subunit protein uS3 (Clostridium botulinum (strain Okra / Type B1)).